A 151-amino-acid chain; its full sequence is Large ribosomal subunit protein uL13 (151 aa).

It belongs to the universal ribosomal protein uL13 family. In terms of assembly, part of the 50S ribosomal subunit.

In terms of biological role, this protein is one of the early assembly proteins of the 50S ribosomal subunit, although it is not seen to bind rRNA by itself. It is important during the early stages of 50S assembly. In Nostoc sp. (strain PCC 7120 / SAG 25.82 / UTEX 2576), this protein is Large ribosomal subunit protein uL13.